The sequence spans 404 residues: UPF0674 endoplasmic reticulum membrane protein YNR021W (404 aa).

Position 2 is an N-acetylserine (Ser-2). Asn-44 is a glycosylation site (N-linked (GlcNAc...) asparagine). Residues 49-68 form a helical membrane-spanning segment; the sequence is LCALGVLFLVYAFYKFGNSV. The N-linked (GlcNAc...) asparagine glycan is linked to Asn-98. The tract at residues 369–404 is disordered; it reads AKRRQLKASGQQEKVDQKMKEKRERRLKNKQRTRFQ. Basic and acidic residues predominate over residues 381-392; the sequence is EKVDQKMKEKRE. The segment covering 393 to 404 has biased composition (basic residues); the sequence is RRLKNKQRTRFQ.

This sequence belongs to the UPF0674 family.

The protein localises to the endoplasmic reticulum membrane. The polypeptide is UPF0674 endoplasmic reticulum membrane protein YNR021W (Saccharomyces cerevisiae (strain ATCC 204508 / S288c) (Baker's yeast)).